The following is a 156-amino-acid chain: Small ribosomal subunit protein uS7 (156 aa).

Belongs to the universal ribosomal protein uS7 family. As to quaternary structure, part of the 30S ribosomal subunit. Contacts proteins S9 and S11.

Its function is as follows. One of the primary rRNA binding proteins, it binds directly to 16S rRNA where it nucleates assembly of the head domain of the 30S subunit. Is located at the subunit interface close to the decoding center, probably blocks exit of the E-site tRNA. The polypeptide is Small ribosomal subunit protein uS7 (Desulfatibacillum aliphaticivorans).